The sequence spans 276 residues: Ribosomal RNA small subunit methyltransferase A (276 aa).

6 residues coordinate S-adenosyl-L-methionine: Asn-19, Leu-21, Gly-46, Glu-71, Asp-94, and Asn-117.

It belongs to the class I-like SAM-binding methyltransferase superfamily. rRNA adenine N(6)-methyltransferase family. RsmA subfamily.

Its subcellular location is the cytoplasm. It catalyses the reaction adenosine(1518)/adenosine(1519) in 16S rRNA + 4 S-adenosyl-L-methionine = N(6)-dimethyladenosine(1518)/N(6)-dimethyladenosine(1519) in 16S rRNA + 4 S-adenosyl-L-homocysteine + 4 H(+). Its function is as follows. Specifically dimethylates two adjacent adenosines (A1518 and A1519) in the loop of a conserved hairpin near the 3'-end of 16S rRNA in the 30S particle. May play a critical role in biogenesis of 30S subunits. This Burkholderia ambifaria (strain ATCC BAA-244 / DSM 16087 / CCUG 44356 / LMG 19182 / AMMD) (Burkholderia cepacia (strain AMMD)) protein is Ribosomal RNA small subunit methyltransferase A.